The following is a 178-amino-acid chain: Large ribosomal subunit protein uL6 (178 aa).

The protein belongs to the universal ribosomal protein uL6 family. Part of the 50S ribosomal subunit.

Its function is as follows. This protein binds to the 23S rRNA, and is important in its secondary structure. It is located near the subunit interface in the base of the L7/L12 stalk, and near the tRNA binding site of the peptidyltransferase center. This Paenarthrobacter aurescens (strain TC1) protein is Large ribosomal subunit protein uL6.